The sequence spans 318 residues: Methionyl-tRNA formyltransferase (318 aa).

115-118 contacts (6S)-5,6,7,8-tetrahydrofolate; the sequence is SLLP.

It belongs to the Fmt family.

It catalyses the reaction L-methionyl-tRNA(fMet) + (6R)-10-formyltetrahydrofolate = N-formyl-L-methionyl-tRNA(fMet) + (6S)-5,6,7,8-tetrahydrofolate + H(+). In terms of biological role, attaches a formyl group to the free amino group of methionyl-tRNA(fMet). The formyl group appears to play a dual role in the initiator identity of N-formylmethionyl-tRNA by promoting its recognition by IF2 and preventing the misappropriation of this tRNA by the elongation apparatus. In Deinococcus radiodurans (strain ATCC 13939 / DSM 20539 / JCM 16871 / CCUG 27074 / LMG 4051 / NBRC 15346 / NCIMB 9279 / VKM B-1422 / R1), this protein is Methionyl-tRNA formyltransferase.